Here is a 60-residue protein sequence, read N- to C-terminus: Large ribosomal subunit protein bL32 (60 aa).

The disordered stretch occupies residues 1–27 (MAVPRNRLSNARKNSKRAHHAKKPKSL). Over residues 13-25 (KNSKRAHHAKKPK) the composition is skewed to basic residues.

This sequence belongs to the bacterial ribosomal protein bL32 family.

The chain is Large ribosomal subunit protein bL32 from Protochlamydia amoebophila (strain UWE25).